The primary structure comprises 121 residues: uncharacterized protein (121 aa).

A coiled-coil region spans residues 8–37 (KQLMVCRDEIKKLKLKEKEAKNRILTYLKN).

This is an uncharacterized protein from Aedes vexans (Inland floodwater mosquito).